Here is a 174-residue protein sequence, read N- to C-terminus: Methylated-DNA--protein-cysteine methyltransferase (174 aa).

Cysteine 141 acts as the Nucleophile; methyl group acceptor in catalysis.

The protein belongs to the MGMT family.

It localises to the cytoplasm. The enzyme catalyses a 6-O-methyl-2'-deoxyguanosine in DNA + L-cysteinyl-[protein] = S-methyl-L-cysteinyl-[protein] + a 2'-deoxyguanosine in DNA. It catalyses the reaction a 4-O-methyl-thymidine in DNA + L-cysteinyl-[protein] = a thymidine in DNA + S-methyl-L-cysteinyl-[protein]. In terms of biological role, involved in the cellular defense against the biological effects of O6-methylguanine (O6-MeG) and O4-methylthymine (O4-MeT) in DNA. Repairs the methylated nucleobase in DNA by stoichiometrically transferring the methyl group to a cysteine residue in the enzyme. This is a suicide reaction: the enzyme is irreversibly inactivated. The polypeptide is Methylated-DNA--protein-cysteine methyltransferase (Thermococcus gammatolerans (strain DSM 15229 / JCM 11827 / EJ3)).